The chain runs to 215 residues: Probable nicotinate-nucleotide adenylyltransferase (215 aa).

Belongs to the NadD family.

It carries out the reaction nicotinate beta-D-ribonucleotide + ATP + H(+) = deamido-NAD(+) + diphosphate. It participates in cofactor biosynthesis; NAD(+) biosynthesis; deamido-NAD(+) from nicotinate D-ribonucleotide: step 1/1. Functionally, catalyzes the reversible adenylation of nicotinate mononucleotide (NaMN) to nicotinic acid adenine dinucleotide (NaAD). The sequence is that of Probable nicotinate-nucleotide adenylyltransferase from Coxiella burnetii (strain RSA 331 / Henzerling II).